A 264-amino-acid polypeptide reads, in one-letter code: Meiotic recombination protein REC102 (264 aa).

Belongs to the TOP6B-like family. As to quaternary structure, interacts with REC104; seems to form a functional unit with REC104. REC102-REC104 interacts with SKI8-SPO11 and this interaction is required for proper subcellular location of the proteins during the initiation of recombination. Interacts with MEI4, REC114 and SPO11.

It localises to the nucleus. Functionally, required for formation of the SPO11-mediated double-strand breaks (DSBs) that initiate meiotic recombination. May mediate the interaction between SPO11 subunits during meiosis. Also needed for homolog chromosome pairing, synaptonemal complex formation, and for the proper timing of the first meiotic division. Not required for mitosis and mitotic DNA repair mechanisms. The sequence is that of Meiotic recombination protein REC102 from Saccharomyces cerevisiae (strain ATCC 204508 / S288c) (Baker's yeast).